A 300-amino-acid polypeptide reads, in one-letter code: Transcription initiation factor IIB (300 aa).

The TFIIB-type zinc finger occupies 2 to 34 (NKQKVCPACESAELIYDPERGEIVCAKCGYVIE). Positions 7, 10, 26, and 29 each coordinate Zn(2+). 2 repeat units span residues 114-197 (SELD…ARNL) and 210-291 (DYVN…ELVE).

It belongs to the TFIIB family.

Functionally, stabilizes TBP binding to an archaeal box-A promoter. Also responsible for recruiting RNA polymerase II to the pre-initiation complex (DNA-TBP-TFIIB). This is Transcription initiation factor IIB from Pyrococcus furiosus (strain ATCC 43587 / DSM 3638 / JCM 8422 / Vc1).